Reading from the N-terminus, the 279-residue chain is MANLIDGKLISTQIKDELKEEVTELKKKGIEGCLAVIQVGNDPASSVYVRNKKKACEYVGIKSLSYELAEETTEDEILKLIEKLNADSSVNGILCQLPLPKHIDEDKVIDAIDPKKDVDGFSPQSVGAMVIGKPGFLPCTPAGIIQLLKRSNIDIDGKSCVVVGRSNIVGKPMSLLMLRENATVTVCHSHTKDLKDVCKNADILIVAIGKPKFIDASYVKDGAVVIDVGIHRNAENKLCGDVDFDSVVSKASHITPVPGGVGPMTIAMLMSNCVEAMKR.

Residues 164-166 (GRS), Ser-189, and Ile-230 contribute to the NADP(+) site.

The protein belongs to the tetrahydrofolate dehydrogenase/cyclohydrolase family. As to quaternary structure, homodimer.

The catalysed reaction is (6R)-5,10-methylene-5,6,7,8-tetrahydrofolate + NADP(+) = (6R)-5,10-methenyltetrahydrofolate + NADPH. It catalyses the reaction (6R)-5,10-methenyltetrahydrofolate + H2O = (6R)-10-formyltetrahydrofolate + H(+). It functions in the pathway one-carbon metabolism; tetrahydrofolate interconversion. In terms of biological role, catalyzes the oxidation of 5,10-methylenetetrahydrofolate to 5,10-methenyltetrahydrofolate and then the hydrolysis of 5,10-methenyltetrahydrofolate to 10-formyltetrahydrofolate. In Agathobacter rectalis (strain ATCC 33656 / DSM 3377 / JCM 17463 / KCTC 5835 / VPI 0990) (Eubacterium rectale), this protein is Bifunctional protein FolD.